Reading from the N-terminus, the 540-residue chain is Putative cysteine ligase BshC (540 aa).

Residues 425–453 are a coiled coil; sequence IEKVEGMIEQQRRLNKDLLDEVAGNQNNI.

It belongs to the BshC family.

Its function is as follows. Involved in bacillithiol (BSH) biosynthesis. May catalyze the last step of the pathway, the addition of cysteine to glucosamine malate (GlcN-Mal) to generate BSH. In Staphylococcus aureus (strain NCTC 8325 / PS 47), this protein is Putative cysteine ligase BshC.